Reading from the N-terminus, the 293-residue chain is Indole-3-glycerol phosphate synthase (293 aa).

This sequence belongs to the TrpC family.

It carries out the reaction 1-(2-carboxyphenylamino)-1-deoxy-D-ribulose 5-phosphate + H(+) = (1S,2R)-1-C-(indol-3-yl)glycerol 3-phosphate + CO2 + H2O. It functions in the pathway amino-acid biosynthesis; L-tryptophan biosynthesis; L-tryptophan from chorismate: step 4/5. This is Indole-3-glycerol phosphate synthase from Prochlorococcus marinus (strain SARG / CCMP1375 / SS120).